Here is a 194-residue protein sequence, read N- to C-terminus: Probable RNA 2'-phosphotransferase (194 aa).

This sequence belongs to the KptA/TPT1 family.

In terms of biological role, removes the 2'-phosphate from RNA via an intermediate in which the phosphate is ADP-ribosylated by NAD followed by a presumed transesterification to release the RNA and generate ADP-ribose 1''-2''-cyclic phosphate (APPR&gt;P). May function as an ADP-ribosylase. In Escherichia coli O45:K1 (strain S88 / ExPEC), this protein is Probable RNA 2'-phosphotransferase.